The sequence spans 656 residues: MQGNRDGSWSLRASAYGGSGNGNGGYLPQTTPVFHNYIVKQQQPIRYNFQTQQNLNFPHPQFGGGANVELIRIDKAVNNTRKSLIAAGDNVSSTRVSQSVLAQLQADTWRSLGIWMQDVPSLRQLMALEGKIIAFIHCFIGARGIVTLHDLEVAICQNEFVGCFDDLGLGPLLQHPLVLLYFPSVYCSTAPVKITSEEIISLLDSYLNTYDIDDVKLDEFLDFVAEAKAVTSKEKLGVRIQNLRMYVSFIQDAKRQEGEILKIVLTELHQKYRILSSKKQRQDKDYCGKHTRFNSPSSEENDSADYEVENVKRSDHFSSCPYSSAEEEVKQLGSSSKKRKAESRNHEKSDSPKLLRRGPSKLRRGHVKQKIPKSADDSDAQIFSVNDADFTLSEGALKLFISTWKETCKELSISVFVKKLLSFYNLGGSEVHGQIKIATAVSSFPFVGLLHVAKELVTEALEEQIPTEITITNLVAGYNDCTGTRSRANMPNPTKSCSTPVTLAHNSVSTDFSIRNQLHTGALWAAQAQESGKKGEEIAYRYFVAKYGKKALVKWVNEHSETGLPYDLIIENRGGNKEYVEVKATVSTGKDYFNLSVKEWEFANEKGESYVIAHVLLGNSNAILTQQRNLVKLRQDGHLRLLILMPSQRNEVNVAF.

The disordered stretch occupies residues 283-375 (DKDYCGKHTR…HVKQKIPKSA (93 aa)). A compositionally biased stretch (acidic residues) spans 299–308 (EENDSADYEV). The span at 342–353 (ESRNHEKSDSPK) shows a compositional bias: basic and acidic residues. The segment covering 354 to 371 (LLRRGPSKLRRGHVKQKI) has biased composition (basic residues).

This Arabidopsis thaliana (Mouse-ear cress) protein is Protein NO VEIN-LIKE.